The primary structure comprises 505 residues: Histidine ammonia-lyase (505 aa).

The 5-imidazolinone (Ala-Gly) cross-link spans 141 to 143; that stretch reads ASG. 2,3-didehydroalanine (Ser) is present on S142.

This sequence belongs to the PAL/histidase family. Post-translationally, contains an active site 4-methylidene-imidazol-5-one (MIO), which is formed autocatalytically by cyclization and dehydration of residues Ala-Ser-Gly.

It localises to the cytoplasm. The catalysed reaction is L-histidine = trans-urocanate + NH4(+). The protein operates within amino-acid degradation; L-histidine degradation into L-glutamate; N-formimidoyl-L-glutamate from L-histidine: step 1/3. This is Histidine ammonia-lyase from Bacillus thuringiensis (strain Al Hakam).